The chain runs to 348 residues: Rhodopsin (348 aa).

Met-1 carries the post-translational modification N-acetylmethionine. Residues 1–36 (MNGTEGPNFYVPFSNKTGVVRSPFEAPQYYLAEPWQ) are Extracellular-facing. N-linked (GlcNAc...) asparagine glycosylation is found at Asn-2 and Asn-15. Residues 37–61 (FSMLAAYMFLLIMLGFPINFLTLYV) traverse the membrane as a helical segment. Residues 62-73 (TVQHKKLRTPLN) lie on the Cytoplasmic side of the membrane. A helical transmembrane segment spans residues 74 to 96 (YILLNLAVADLFMVFGGFTTTLY). At 97-110 (TSLHGYFVFGPTGC) the chain is on the extracellular side. A disulfide bond links Cys-110 and Cys-187. Residues 111 to 133 (NLEGFFATLGGEIALWSLVVLAI) form a helical membrane-spanning segment. The 'Ionic lock' involved in activated form stabilization motif lies at 134 to 136 (ERY). Residues 134–152 (ERYVVVCKPMSNFRFGENH) are Cytoplasmic-facing. Residues 153-173 (AIMGVAFTWVMALACAAPPLV) traverse the membrane as a helical segment. The Extracellular segment spans residues 174–202 (GWSRYIPEGMQCSCGIDYYTPHEETNNES). Zn(2+) is bound at residue Glu-201. The chain crosses the membrane as a helical span at residues 203 to 224 (FVIYMFVVHFIIPLIVIFFCYG). The Cytoplasmic segment spans residues 225 to 252 (QLVFTVKEAAAQQQESATTQKAEKEVTR). The helical transmembrane segment at 253-274 (MVIIMVIAFLICWLPYAGVAFY) threads the bilayer. Residues 275 to 286 (IFTHQGSDFGPI) lie on the Extracellular side of the membrane. Gln-279 lines the Zn(2+) pocket. Residues 287 to 308 (FMTIPAFFAKTSAVYNPVIYIM) form a helical membrane-spanning segment. Residue Lys-296 is modified to N6-(retinylidene)lysine. The Cytoplasmic portion of the chain corresponds to 309–348 (MNKQFRNCMVTTLCCGKNPLGDDEASTTVSKTETSQVAPA). S-palmitoyl cysteine attachment occurs at residues Cys-322 and Cys-323. Positions 330 to 348 (DDEASTTVSKTETSQVAPA) are interaction with SAG. Position 334 is a phosphoserine (Ser-334). Thr-335 and Thr-336 each carry phosphothreonine. A Phosphoserine modification is found at Ser-338. Phosphothreonine is present on residues Thr-340 and Thr-342. Ser-343 bears the Phosphoserine; by RK and GRK7 mark.

It belongs to the G-protein coupled receptor 1 family. Opsin subfamily. In terms of assembly, homodimer. May form a complex composed of RHO, GRK1 and RCVRN in a Ca(2+)-dependent manner; RCVRN prevents the interaction between GRK1 and RHO. Interacts with GRK1. Interacts (phosphorylated form) with SAG. Interacts with GNAT1. Interacts with GNAT3. SAG and G-proteins compete for a common binding site. Interacts with PRCD; the interaction promotes PRCD stability. Forms a complex with ASAP1 and ARF4. Forms a complex with ASAP1, RAB11A, Rabin8/RAB3IP, ARF4 and RAB11FIP3; the complex regulates Golgi-to-cilia rhodopsin/RHO transport in photoreceptors. Phosphorylated on some or all of the serine and threonine residues present in the C-terminal region. Post-translationally, contains one covalently linked retinal chromophore. Upon light absorption, the covalently bound 11-cis-retinal is converted to all-trans-retinal. After hydrolysis of the Schiff base and release of the covalently bound all-trans-retinal, active rhodopsin is regenerated by binding of a fresh molecule of 11-cis-retinal. Expressed in rod-shaped photoreceptor cells in the retina that mediate vision in dim light (at protein level).

The protein localises to the membrane. Its subcellular location is the cell projection. It localises to the cilium. The protein resides in the photoreceptor outer segment. Functionally, photoreceptor required for image-forming vision at low light intensity. Required for photoreceptor cell viability after birth. Light-induced isomerization of 11-cis to all-trans retinal triggers a conformational change that activates signaling via G-proteins. Subsequent receptor phosphorylation mediates displacement of the bound G-protein alpha subunit by the arrestin SAG and terminates signaling. In Bos taurus (Bovine), this protein is Rhodopsin (RHO).